The chain runs to 182 residues: ATP synthase subunit b, chloroplastic (182 aa).

The helical transmembrane segment at 33 to 55 (VLNIMLLLFGLIYVLKQFLGSLL) threads the bilayer.

It belongs to the ATPase B chain family. F-type ATPases have 2 components, F(1) - the catalytic core - and F(0) - the membrane proton channel. F(1) has five subunits: alpha(3), beta(3), gamma(1), delta(1), epsilon(1). F(0) has four main subunits: a(1), b(1), b'(1) and c(10-14). The alpha and beta chains form an alternating ring which encloses part of the gamma chain. F(1) is attached to F(0) by a central stalk formed by the gamma and epsilon chains, while a peripheral stalk is formed by the delta, b and b' chains.

It is found in the plastid. The protein resides in the chloroplast thylakoid membrane. F(1)F(0) ATP synthase produces ATP from ADP in the presence of a proton or sodium gradient. F-type ATPases consist of two structural domains, F(1) containing the extramembraneous catalytic core and F(0) containing the membrane proton channel, linked together by a central stalk and a peripheral stalk. During catalysis, ATP synthesis in the catalytic domain of F(1) is coupled via a rotary mechanism of the central stalk subunits to proton translocation. Functionally, component of the F(0) channel, it forms part of the peripheral stalk, linking F(1) to F(0). The sequence is that of ATP synthase subunit b, chloroplastic from Antithamnion sp. (Red alga).